The primary structure comprises 210 residues: 23 kDa jasmonate-induced protein (210 aa).

This sequence belongs to the jasmonate-induced protein family.

This Hordeum vulgare (Barley) protein is 23 kDa jasmonate-induced protein.